The sequence spans 1054 residues: Putative disease resistance RPP13-like protein 1 (1054 aa).

Leucine-zipper regions lie at residues 9–20 (LAAFLQALFQTL) and 39–53 (LERLSTALLTITAVL). The stretch at 117-147 (DFLDGNSEHLETRLEKVTIRLERLASQRNIL) forms a coiled coil. The 311-residue stretch at 152-462 (LTAMIPKQRL…AEGFLQQTRS (311 aa)) folds into the NB-ARC domain. 203–210 (GIGGVGKT) lines the ATP pocket. LRR repeat units lie at residues 579 to 600 (RLRVLSLSHYKIARLPPDFFKN), 603 to 624 (HARFLDLSRTELEKLPKSLCYM), 626 to 648 (NLQTLLLSYCSSLKELPTDISNL), 650 to 672 (NLRYLDLIGTKLRQMPRRFGRLK), and 676 to 697 (TLTTFFVSASDGSRISELGGLH). The segment at 1018-1054 (PQYHHPQFHLPRSNVSGSPKSHGSHRSYDSRSSSRYD) is disordered. Positions 1043–1054 (RSYDSRSSSRYD) are enriched in basic and acidic residues.

It belongs to the disease resistance NB-LRR family. RPP13 subfamily.

Its function is as follows. Potential disease resistance protein. The sequence is that of Putative disease resistance RPP13-like protein 1 (RPPL1) from Arabidopsis thaliana (Mouse-ear cress).